Reading from the N-terminus, the 164-residue chain is UPF0114 protein KPK_0696 (164 aa).

A run of 4 helical transmembrane segments spans residues 15–35 (LLAP…IKFF), 53–73 (LILT…LVMV), 109–126 (VAAS…RVFM), and 136–156 (LMWY…MGYL).

This sequence belongs to the UPF0114 family.

The protein localises to the cell membrane. The chain is UPF0114 protein KPK_0696 from Klebsiella pneumoniae (strain 342).